Reading from the N-terminus, the 82-residue chain is Sulfur carrier protein TusA (82 aa).

Residue Cys19 is the Cysteine persulfide intermediate of the active site.

It belongs to the sulfur carrier protein TusA family.

Its subcellular location is the cytoplasm. Functionally, sulfur carrier protein which probably makes part of a sulfur-relay system. This chain is Sulfur carrier protein TusA, found in Tolumonas auensis (strain DSM 9187 / NBRC 110442 / TA 4).